Here is a 590-residue protein sequence, read N- to C-terminus: (-)-alpha-terpineol synthase (590 aa).

The Mg(2+) site is built by aspartate 339, aspartate 343, aspartate 483, threonine 487, and glutamate 491. The DDXXD motif motif lies at 339–343 (DDVYD).

The protein belongs to the terpene synthase family. Mg(2+) is required as a cofactor.

It carries out the reaction (2E)-geranyl diphosphate + H2O = (S)-alpha-terpineol + diphosphate. Its pathway is secondary metabolite biosynthesis; terpenoid biosynthesis. Functionally, mediates the conversion of geranyl diphosphate into alpha-terpineol, a monoterpenol. Monoterpenols contribute to the final grape and wine aroma and flavor. Also forms some 1,8-cineole and traces of other monoterpenoids. This chain is (-)-alpha-terpineol synthase, found in Vitis vinifera (Grape).